The chain runs to 905 residues: FIGNL1-interacting regulator of recombination and mitosis (905 aa).

2 positions are modified to phosphoserine: Ser101 and Ser796. Lys845 is subject to N6-acetyllysine.

As to quaternary structure, interacts (via its N-terminal region) with PLK1; controls PLK1 kinase activity. Interacts (via the KVVXF motif) with PPP1CC; controls PLK1 kinase activity. Interacts with FIGNL1; may regulate homologous recombination. Post-translationally, phosphorylation at Ser-101 by PLK1 strengthens FIRRM-PLK1 interaction. Phosphorylation at Ser-796 by PLK1 negatively regulates its interaction with PPP1CC.

Its subcellular location is the chromosome. The protein resides in the centromere. The protein localises to the kinetochore. It localises to the nucleus. It is found in the midbody. Its subcellular location is the cytoplasm. The protein resides in the cytoskeleton. The protein localises to the spindle. Regulates PLK1 kinase activity at kinetochores and promotes faithful chromosome segregation in prometaphase by bridging kinase and phosphatase activities. Phosphorylation of FIRRM by PLK1 negatively regulates its interaction with the phosphatase, PPP1CC, thus creating a negative feedback loop for maintaining proper PLK1 kinase activity during mitosis. In complex with FIGL1 may regulate homologous recombination. The polypeptide is FIGNL1-interacting regulator of recombination and mitosis (Rattus norvegicus (Rat)).